Here is a 466-residue protein sequence, read N- to C-terminus: ATP synthase subunit beta (466 aa).

Residue Gly-148–Thr-155 coordinates ATP.

The protein belongs to the ATPase alpha/beta chains family. As to quaternary structure, F-type ATPases have 2 components, CF(1) - the catalytic core - and CF(0) - the membrane proton channel. CF(1) has five subunits: alpha(3), beta(3), gamma(1), delta(1), epsilon(1). CF(0) has three main subunits: a(1), b(2) and c(9-12). The alpha and beta chains form an alternating ring which encloses part of the gamma chain. CF(1) is attached to CF(0) by a central stalk formed by the gamma and epsilon chains, while a peripheral stalk is formed by the delta and b chains.

The protein localises to the cell inner membrane. The enzyme catalyses ATP + H2O + 4 H(+)(in) = ADP + phosphate + 5 H(+)(out). In terms of biological role, produces ATP from ADP in the presence of a proton gradient across the membrane. The catalytic sites are hosted primarily by the beta subunits. The chain is ATP synthase subunit beta from Herminiimonas arsenicoxydans.